Reading from the N-terminus, the 108-residue chain is ATP synthase peripheral stalk subunit F6, mitochondrial (108 aa).

The transit peptide at 1–32 directs the protein to the mitochondrion; it reads MVLQRIFRLSSVLRSAVSVHLKRNIGVTAVAF. Lys-41, Lys-46, and Lys-79 each carry N6-acetyllysine. N6-acetyllysine; alternate occurs at positions 84, 94, and 99. N6-succinyllysine; alternate occurs at positions 84, 94, and 99. Lys-105 carries the N6-acetyllysine modification. The residue at position 108 (Ser-108) is a Phosphoserine.

It belongs to the eukaryotic ATPase subunit F6 family. As to quaternary structure, component of the ATP synthase complex composed at least of ATP5F1A/subunit alpha, ATP5F1B/subunit beta, ATP5MC1/subunit c (homooctomer), MT-ATP6/subunit a, MT-ATP8/subunit 8, ATP5ME/subunit e, ATP5MF/subunit f, ATP5MG/subunit g, ATP5MK/subunit k, ATP5MJ/subunit j, ATP5F1C/subunit gamma, ATP5F1D/subunit delta, ATP5F1E/subunit epsilon, ATP5PF/subunit F6, ATP5PB/subunit b, ATP5PD/subunit d, ATP5PO/subunit OSCP. ATP synthase complex consists of a soluble F(1) head domain (subunits alpha(3) and beta(3)) - the catalytic core - and a membrane F(0) domain - the membrane proton channel (subunits c, a, 8, e, f, g, k and j). These two domains are linked by a central stalk (subunits gamma, delta, and epsilon) rotating inside the F1 region and a stationary peripheral stalk (subunits F6, b, d, and OSCP).

The protein resides in the mitochondrion. It localises to the mitochondrion inner membrane. In terms of biological role, subunit F6, of the mitochondrial membrane ATP synthase complex (F(1)F(0) ATP synthase or Complex V) that produces ATP from ADP in the presence of a proton gradient across the membrane which is generated by electron transport complexes of the respiratory chain. ATP synthase complex consist of a soluble F(1) head domain - the catalytic core - and a membrane F(1) domain - the membrane proton channel. These two domains are linked by a central stalk rotating inside the F(1) region and a stationary peripheral stalk. During catalysis, ATP synthesis in the catalytic domain of F(1) is coupled via a rotary mechanism of the central stalk subunits to proton translocation. In vivo, can only synthesize ATP although its ATP hydrolase activity can be activated artificially in vitro. Part of the complex F(0) domain. Part of the complex F(0) domain and the peripheric stalk, which acts as a stator to hold the catalytic alpha(3)beta(3) subcomplex and subunit a/ATP6 static relative to the rotary elements. The sequence is that of ATP synthase peripheral stalk subunit F6, mitochondrial from Mus musculus (Mouse).